Reading from the N-terminus, the 296-residue chain is Probable lipid kinase YegS-like (296 aa).

Positions 1 to 130 (MPHTLLILNG…IDLAQVNGEH (130 aa)) constitute a DAGKc domain. ATP is bound by residues T37, 63 to 69 (GDGTINE), and T92. Mg(2+) is bound by residues L212, D215, and L217. E268 acts as the Proton acceptor in catalysis.

Belongs to the diacylglycerol/lipid kinase family. YegS lipid kinase subfamily. The cofactor is Mg(2+). Ca(2+) is required as a cofactor.

The protein resides in the cytoplasm. Functionally, probably phosphorylates lipids; the in vivo substrate is unknown. The chain is Probable lipid kinase YegS-like from Yersinia pestis bv. Antiqua (strain Angola).